A 343-amino-acid chain; its full sequence is ABC transporter riboflavin-binding protein RfuA (343 aa).

A signal peptide spans 1 to 19 (MNGAVCVLSALIAVFTCFS). Cys-20 carries N-palmitoyl cysteine lipidation. The S-diacylglycerol cysteine moiety is linked to residue Cys-20. Riboflavin-binding positions include 43–46 (SPVY), Asp-124, Gln-140, Tyr-176, Trp-208, and Asp-255.

This sequence belongs to the BMP lipoprotein family. In terms of assembly, monomer in solution. The complex is probably composed of two ATP-binding proteins (RfuB), two transmembrane proteins (RfuC and RfuD) and a solute-binding protein (RfuA).

The protein resides in the cell inner membrane. Its function is as follows. Probably part of the ABC transporter complex RfuABCD involved in riboflavin import. Binds riboflavin. The polypeptide is ABC transporter riboflavin-binding protein RfuA (Treponema pallidum (strain Nichols)).